We begin with the raw amino-acid sequence, 1302 residues long: Zinc finger protein 536 (1302 aa).

Residues 1–26 (MEEASLCLGVSSTAPEAEPHLSGPVL) are disordered. C2H2-type zinc fingers lie at residues 130–152 (YPCP…MRTH), 158–180 (FKCP…LRTH), 274–297 (FRCT…RILH), 300–323 (YKCT…EKAH), 345–367 (FRCE…MRKH), 373–395 (HCCQ…MKVH), and 631–653 (TECP…SRVH). A disordered region spans residues 650-736 (SRVHKRDRKS…IGEEAGRAGG (87 aa)). Basic and acidic residues predominate over residues 657-676 (RKSDEDALHVGVGLEERRGS). The segment covering 677–698 (GSDQESQSVSRSTTPGSSNVTE) has biased composition (polar residues). 2 consecutive C2H2-type zinc fingers follow at residues 753–775 (KDCP…LRIH) and 781–803 (YKCP…LERH). Disordered stretches follow at residues 804–832 (HRER…SKAP), 855–897 (GPAS…SKSS), 935–988 (KDTK…APTL), and 1133–1261 (NKNT…GLEK). A phosphoserine mark is found at Ser828 and Ser829. Positions 869–883 (GDHSGQATGMPSELS) are enriched in polar residues. Basic and acidic residues predominate over residues 935-973 (KDTKDKVPSDAHPMKAHTAEGGEEKASMKPSQRKSEKSQ). Acidic residues-rich tracts occupy residues 1161–1171 (DLSDIASSEDM) and 1179–1188 (NEDEELDTEP). A compositionally biased stretch (low complexity) spans 1198-1212 (LSKDGSSEGGDSLLS).

It belongs to the krueppel C2H2-type zinc-finger protein family. Expressed predominantly in the brain, while a weak signal is also detected in the heart and testis. Expression is abundant in neuronal cells of the cerebral cortex, hippocampus and hypothalamic area (at protein level).

The protein resides in the nucleus. Functionally, transcriptional repressor that negatively regulates neuron differentiation by repressing retinoic acid-induced gene transcription. Binds and interrupts RARA from binding to retinoic acid response elements (RARE) composed of tandem 5'-AGGTCA-3' sites known as DR1-DR5. Recognizes and binds 2 copies of the core DNA sequence 5'-CCCCCA-3'. This Mus musculus (Mouse) protein is Zinc finger protein 536 (Znf536).